The following is a 122-amino-acid chain: Histone H2B.2 (122 aa).

Positions 1–10 (MAPKKAPAAT) are enriched in low complexity. The tract at residues 1–28 (MAPKKAPAATTEKKVKKAPTTEKKNKKK) is disordered. At Ala-2 the chain carries N,N,N-trimethylalanine. N6-acetyllysine occurs at positions 5 and 42. A Glycyl lysine isopeptide (Lys-Gly) (interchain with G-Cter in ubiquitin) cross-link involves residue Lys-116.

This sequence belongs to the histone H2B family. In terms of assembly, the nucleosome is a histone octamer containing two molecules each of H2A, H2B, H3 and H4 assembled in one H3-H4 heterotetramer and two H2A-H2B heterodimers. The octamer wraps approximately 147 bp of DNA. Post-translationally, acetylation occurs almost exclusively in the MAC. Monoubiquitination to form H2BK115ub1 gives a specific tag for epigenetic transcriptional activation and is also prerequisite for H3K4me and H3K79me formation.

Its subcellular location is the nucleus. The protein resides in the chromosome. Core component of nucleosome. Nucleosomes wrap and compact DNA into chromatin, limiting DNA accessibility to the cellular machineries which require DNA as a template. Histones thereby play a central role in transcription regulation, DNA repair, DNA replication and chromosomal stability. DNA accessibility is regulated via a complex set of post-translational modifications of histones, also called histone code, and nucleosome remodeling. The protein is Histone H2B.2 (HTB2) of Tetrahymena thermophila (strain SB210).